The following is a 204-amino-acid chain: Putative AgrB-like protein (204 aa).

Transmembrane regions (helical) follow at residues 51 to 73 (VYGIALVTGLLLQTVTVHLSYLW), 87 to 107 (LNCTLISLTMFVLAPFIFQNI), 111 to 131 (NWIVLGTFAFILLNMFLFAPA), 151 to 168 (AMIGTLILTGIALLIPFA), and 173 to 190 (LIMVGSLFQVISINPLTY).

The protein belongs to the AgrB family.

It localises to the cell membrane. Functionally, may be involved in the proteolytic processing of a quorum sensing system signal molecule precursor. In Listeria innocua serovar 6a (strain ATCC BAA-680 / CLIP 11262), this protein is Putative AgrB-like protein.